Reading from the N-terminus, the 152-residue chain is SsrA-binding protein (152 aa).

The protein belongs to the SmpB family.

Its subcellular location is the cytoplasm. Required for rescue of stalled ribosomes mediated by trans-translation. Binds to transfer-messenger RNA (tmRNA), required for stable association of tmRNA with ribosomes. tmRNA and SmpB together mimic tRNA shape, replacing the anticodon stem-loop with SmpB. tmRNA is encoded by the ssrA gene; the 2 termini fold to resemble tRNA(Ala) and it encodes a 'tag peptide', a short internal open reading frame. During trans-translation Ala-aminoacylated tmRNA acts like a tRNA, entering the A-site of stalled ribosomes, displacing the stalled mRNA. The ribosome then switches to translate the ORF on the tmRNA; the nascent peptide is terminated with the 'tag peptide' encoded by the tmRNA and targeted for degradation. The ribosome is freed to recommence translation, which seems to be the essential function of trans-translation. The protein is SsrA-binding protein of Helicobacter pylori (strain HPAG1).